The following is a 231-amino-acid chain: Flagellar L-ring protein (231 aa).

The first 18 residues, 1 to 18 (MNRLMIVSLLGIATALGG), serve as a signal peptide directing secretion. A lipid anchor (N-palmitoyl cysteine) is attached at Cys19. Cys19 carries S-diacylglycerol cysteine lipidation. The segment at 118–141 (LSLSAEYGGSRDAKGDSQAGQSNS) is disordered.

The protein belongs to the FlgH family. In terms of assembly, the basal body constitutes a major portion of the flagellar organelle and consists of four rings (L,P,S, and M) mounted on a central rod.

The protein resides in the cell outer membrane. The protein localises to the bacterial flagellum basal body. Functionally, assembles around the rod to form the L-ring and probably protects the motor/basal body from shearing forces during rotation. In Pseudomonas aeruginosa (strain LESB58), this protein is Flagellar L-ring protein.